An 87-amino-acid chain; its full sequence is Phosphoribosyl-ATP pyrophosphatase (87 aa).

It belongs to the PRA-PH family.

It is found in the cytoplasm. It catalyses the reaction 1-(5-phospho-beta-D-ribosyl)-ATP + H2O = 1-(5-phospho-beta-D-ribosyl)-5'-AMP + diphosphate + H(+). It functions in the pathway amino-acid biosynthesis; L-histidine biosynthesis; L-histidine from 5-phospho-alpha-D-ribose 1-diphosphate: step 2/9. In Leifsonia xyli subsp. xyli (strain CTCB07), this protein is Phosphoribosyl-ATP pyrophosphatase.